We begin with the raw amino-acid sequence, 501 residues long: Dipeptide and tripeptide permease A (501 aa).

The Cytoplasmic segment spans residues 1 to 34 (MSTANNNQPESISMNAFKQPKAFYLIFSIELWER). The chain crosses the membrane as a helical span at residues 35–55 (FGYYGLQGIMAVYLVKMLGMS). At 56–59 (EADS) the chain is on the periplasmic side. The chain crosses the membrane as a helical span at residues 60 to 80 (ITLFSSFSALVYGFVAIGGWL). Over 81–89 (GDKVLGAKR) the chain is Cytoplasmic. Transmembrane regions (helical) follow at residues 90-110 (VIVLGALTLAVGYSMIAYSGH) and 111-131 (EIFWVYLGMATIAVGNGLFKA). The Periplasmic segment spans residues 132 to 153 (NPSSLLSTCYSKDDPRLDGAFT). Residues 154–174 (MYYMSINIGSFFSMLATPWLA) form a helical membrane-spanning segment. Topologically, residues 175–178 (AKYG) are cytoplasmic. The helical transmembrane segment at 179-199 (WSVAFSLSVVGMLITLVNFWF) threads the bilayer. At 200-220 (CRKWVKNQGSKPDFLPLQFKK) the chain is on the periplasmic side. The chain crosses the membrane as a helical span at residues 221–241 (LLMVLVGIIALITLSNWLLHN). Over 242–246 (QIIAR) the chain is Cytoplasmic. The helical transmembrane segment at 247-267 (WALALVSLGIIFIFTKETLFL) threads the bilayer. Over 268–274 (QGIARRR) the chain is Periplasmic. A helical membrane pass occupies residues 275 to 295 (MIVAFLLMLEAVIFFVLYSQM). Over 296 to 320 (PTSLNFFAIHNVEHSIFGIGFEPEQ) the chain is Cytoplasmic. Residues 321–341 (FQALNPFWIMLASPILAAIYN) traverse the membrane as a helical segment. Over 342–352 (KMGDRLPMPHK) the chain is Periplasmic. A helical membrane pass occupies residues 353 to 373 (FAFGMMLCSAAFLVLPWGASF). At 374-383 (ANEHGIVSVN) the chain is on the cytoplasmic side. A helical transmembrane segment spans residues 384-404 (WLILSYALQSIGELMISGLGL). Over 405–414 (AMVAQLVPQR) the chain is Periplasmic. The helical transmembrane segment at 415–435 (LMGFIMGSWFLTTAAAALIAG) threads the bilayer. Residues 436-460 (KVAALTAVPSDAITDAHASLAIYSH) lie on the Cytoplasmic side of the membrane. A helical membrane pass occupies residues 461-481 (VFMQIGIVTAIIAVLMMLTAP). Residues 482-501 (KLYRMTLAPSDHNDVKIMTQ) are Periplasmic-facing.

It belongs to the major facilitator superfamily. Proton-dependent oligopeptide transporter (POT/PTR) (TC 2.A.17) family. DtpA subfamily.

It is found in the cell inner membrane. In terms of biological role, proton-dependent permease that transports di- and tripeptides. This Yersinia pestis protein is Dipeptide and tripeptide permease A.